The chain runs to 412 residues: MDGDIRKNSYDDGSMDALTGEQSIRNFNINFGPQHPAAHGVLRMVLELDGEIVERADPHIGLLHRGTEKLMESRTYLQNLPYLDRLDYVAPMNQEHAWCLAIERLTGTVIPRRASLIRVLYSEIGRILNHLMGVTTGAMDVGALTPPLWGFEAREELMIFYERACGARLHAAYFRPGGVHQDLPPDLLDDIEEWCERFPKLVDDLDTLLTENRIFKQRLVDIGIVTEADALDWGYTGVMVRGSGLAWDLRRSQPYECYDEFDFQIPVGRNGDCYDRYLCRMAEMRESCKIMQQAVQKLRAEPAGDVLARGKLTPPRRAEMKRDMESLIHHFKLYTEGFKVPAGEVYAAVEAPKGEFGVYLVADGTNKPWRAKLRAPGFAHLQSIDWMSRGHMLADVPAIIATLDIVFGEVDR.

Belongs to the complex I 49 kDa subunit family. In terms of assembly, NDH-1 is composed of at least 14 different subunits, Nqo1 to Nqo14. The complex has a L-shaped structure, with the hydrophobic arm (subunits Nqo7, Nqo8, Nqo10 to Nqo14) embedded in the inner membrane and the hydrophilic peripheral arm (subunits Nqo1 to Nqo6, Nqo9) protruding into the bacterial cytoplasm. The hydrophilic domain contains all the redox centers. NADH-quinone oxidoreductase forms a supercomplex with ubiquinol-cytochrome c reductase complex (complex III or cytochrome b-c1 complex) and cytochrome c oxidase (complex IV), which stabilizes the NADH-quinone oxidoreductase complex.

It localises to the cell inner membrane. It catalyses the reaction a quinone + NADH + 5 H(+)(in) = a quinol + NAD(+) + 4 H(+)(out). Its function is as follows. NDH-1 shuttles electrons from NADH, via FMN and iron-sulfur (Fe-S) centers, to quinones in the respiratory chain. The immediate electron acceptor for the enzyme in this species is believed to be ubiquinone. Couples the redox reaction to proton translocation (for every two electrons transferred, four hydrogen ions are translocated across the cytoplasmic membrane), and thus conserves the redox energy in a proton gradient. The protein is NADH-quinone oxidoreductase subunit D (nuoD) of Paracoccus denitrificans (strain Pd 1222).